Consider the following 247-residue polypeptide: MNIYPAIDLKDGQAVRLLRGDMDQATVFNPDPAAQAAAFQDQGFRWLHLVDLNGAFAGRPVNADAVSRILERVTIPVQLGGGIRDMATIEEWLGRGIRRVILGTVALRDPDLVKDACRAFPGRICVGIDARDGHVAVEGWATTSDVRALDLALRFEDAGVAAIVYTDINRDGAMGGVNVEATADLAVHLTTPVIASGGVHALSDLLALKAEAETGIEGVIVGRALYDGRIDPRQALALTAGPEDARC.

Aspartate 8 serves as the catalytic Proton acceptor. Aspartate 129 (proton donor) is an active-site residue.

It belongs to the HisA/HisF family.

The protein resides in the cytoplasm. The catalysed reaction is 1-(5-phospho-beta-D-ribosyl)-5-[(5-phospho-beta-D-ribosylamino)methylideneamino]imidazole-4-carboxamide = 5-[(5-phospho-1-deoxy-D-ribulos-1-ylimino)methylamino]-1-(5-phospho-beta-D-ribosyl)imidazole-4-carboxamide. The protein operates within amino-acid biosynthesis; L-histidine biosynthesis; L-histidine from 5-phospho-alpha-D-ribose 1-diphosphate: step 4/9. The protein is 1-(5-phosphoribosyl)-5-[(5-phosphoribosylamino)methylideneamino] imidazole-4-carboxamide isomerase of Rhodospirillum centenum (strain ATCC 51521 / SW).